Here is a 120-residue protein sequence, read N- to C-terminus: MARVKRGVTKHQRHKKVLKLAKGFRGAKSKLYRPANEQVMKSLAYAYAHRRDKKGDFRKLWIARINAAARLNGLSYSRMMNGLKIAGVSVNRKMLADLAINDAAAFTELVNVAKAQVSAK.

The protein belongs to the bacterial ribosomal protein bL20 family.

Its function is as follows. Binds directly to 23S ribosomal RNA and is necessary for the in vitro assembly process of the 50S ribosomal subunit. It is not involved in the protein synthesizing functions of that subunit. This chain is Large ribosomal subunit protein bL20, found in Desulfitobacterium hafniense (strain DSM 10664 / DCB-2).